The following is a 167-amino-acid chain: NADH-quinone oxidoreductase subunit B 2 (167 aa).

[4Fe-4S] cluster is bound by residues C38, C39, C103, and C132.

It belongs to the complex I 20 kDa subunit family. In terms of assembly, NDH-1 is composed of 14 different subunits. Subunits NuoB, C, D, E, F, and G constitute the peripheral sector of the complex. [4Fe-4S] cluster is required as a cofactor.

Its subcellular location is the cell inner membrane. The catalysed reaction is a quinone + NADH + 5 H(+)(in) = a quinol + NAD(+) + 4 H(+)(out). Its function is as follows. NDH-1 shuttles electrons from NADH, via FMN and iron-sulfur (Fe-S) centers, to quinones in the respiratory chain. The immediate electron acceptor for the enzyme in this species is believed to be ubiquinone. Couples the redox reaction to proton translocation (for every two electrons transferred, four hydrogen ions are translocated across the cytoplasmic membrane), and thus conserves the redox energy in a proton gradient. This chain is NADH-quinone oxidoreductase subunit B 2, found in Rhizobium etli (strain CIAT 652).